A 653-amino-acid polypeptide reads, in one-letter code: Choline transporter-like protein 3 (653 aa).

Residues 34 to 54 traverse the membrane as a helical segment; the sequence is WLFLFFLFWTGLVFIMGYSVV. 2 N-linked (GlcNAc...) asparagine glycosylation sites follow: asparagine 136 and asparagine 151. The next 5 membrane-spanning stretches (helical) occupy residues 213 to 233, 243 to 263, 284 to 304, 334 to 354, and 384 to 404; these read DTIL…MFTF, IFIS…WWLY, VLGF…LIFV, LWTF…LLSL, and LIGL…TIAG. Asparagine 412, asparagine 503, and asparagine 521 each carry an N-linked (GlcNAc...) asparagine glycan. 2 helical membrane-spanning segments follow: residues 534 to 554 and 563 to 583; these read FIIF…GLMA and VWAV…HSFL. The segment at 632-653 is disordered; that stretch reads RAQQDKHSLRNEEGTELQAIVR. Basic and acidic residues predominate over residues 634–644; it reads QQDKHSLRNEE.

This sequence belongs to the CTL (choline transporter-like) family.

It is found in the membrane. This Homo sapiens (Human) protein is Choline transporter-like protein 3 (SLC44A3).